A 611-amino-acid chain; its full sequence is Threonine--tRNA ligase (611 aa).

The tract at residues 1-27 (MAGPEPEPVSSAAATTPAPSAPVVLPK) is disordered. Over residues 8–24 (PVSSAAATTPAPSAPVV) the composition is skewed to low complexity. The tract at residues 209–502 (DHRRIGKDLD…MTENYAGDYP (294 aa)) is catalytic. Residues C302, H353, and H479 each contribute to the Zn(2+) site.

This sequence belongs to the class-II aminoacyl-tRNA synthetase family. In terms of assembly, homodimer. Zn(2+) is required as a cofactor.

It is found in the cytoplasm. The catalysed reaction is tRNA(Thr) + L-threonine + ATP = L-threonyl-tRNA(Thr) + AMP + diphosphate + H(+). Its function is as follows. Catalyzes the attachment of threonine to tRNA(Thr) in a two-step reaction: L-threonine is first activated by ATP to form Thr-AMP and then transferred to the acceptor end of tRNA(Thr). Also edits incorrectly charged L-seryl-tRNA(Thr). This Synechococcus sp. (strain CC9605) protein is Threonine--tRNA ligase.